The chain runs to 156 residues: Snaclec A10 (156 aa).

The signal sequence occupies residues 1-23 (MGRSISVSFGLLVVFLSLSGIGA). 3 disulfide bridges follow: C27–C38, C55–C154, and C129–C146. The region spanning 34–155 (YDQHCYQAVD…CGQPYRFTCE (122 aa)) is the C-type lectin domain.

This sequence belongs to the snaclec family. As to quaternary structure, heterodimer; disulfide-linked. As to expression, expressed by the venom gland.

It is found in the secreted. Its function is as follows. Interferes with one step of hemostasis (modulation of platelet aggregation, or coagulation cascade, for example). In Macrovipera lebetinus (Levantine viper), this protein is Snaclec A10.